The primary structure comprises 75 residues: UPF0154 protein MYPU_1460 (75 aa).

A helical transmembrane segment spans residues 8–28; sequence GLIVGLSILFFIIGGVVAFFV.

Belongs to the UPF0154 family.

It localises to the membrane. This is UPF0154 protein MYPU_1460 from Mycoplasmopsis pulmonis (strain UAB CTIP) (Mycoplasma pulmonis).